The chain runs to 37 residues: Photosystem I reaction center subunit VIII (37 aa).

The helical transmembrane segment at 7–27 threads the bilayer; that stretch reads LPAIFVPLVGLVFPAIAMVSL.

Belongs to the PsaI family.

Its subcellular location is the plastid. It localises to the chloroplast thylakoid membrane. May help in the organization of the PsaL subunit. The protein is Photosystem I reaction center subunit VIII of Morus indica (Mulberry).